A 130-amino-acid chain; its full sequence is Large ribosomal subunit protein bL12 (130 aa).

Belongs to the bacterial ribosomal protein bL12 family. As to quaternary structure, homodimer. Part of the ribosomal stalk of the 50S ribosomal subunit. Forms a multimeric L10(L12)X complex, where L10 forms an elongated spine to which 2 to 4 L12 dimers bind in a sequential fashion. Binds GTP-bound translation factors.

Its function is as follows. Forms part of the ribosomal stalk which helps the ribosome interact with GTP-bound translation factors. Is thus essential for accurate translation. The sequence is that of Large ribosomal subunit protein bL12 from Chlamydia muridarum (strain MoPn / Nigg).